The chain runs to 507 residues: Glucose-6-phosphate isomerase (507 aa).

E338 (proton donor) is an active-site residue. Catalysis depends on residues H369 and K479.

It belongs to the GPI family.

Its subcellular location is the cytoplasm. The enzyme catalyses alpha-D-glucose 6-phosphate = beta-D-fructose 6-phosphate. It participates in carbohydrate biosynthesis; gluconeogenesis. Its pathway is carbohydrate degradation; glycolysis; D-glyceraldehyde 3-phosphate and glycerone phosphate from D-glucose: step 2/4. Its function is as follows. Provides a gateway for fructose into the Entner-Doudouroff pathway. In terms of biological role, catalyzes the reversible isomerization of glucose-6-phosphate to fructose-6-phosphate. The polypeptide is Glucose-6-phosphate isomerase (Zymomonas mobilis subsp. mobilis (strain ATCC 31821 / ZM4 / CP4)).